We begin with the raw amino-acid sequence, 65 residues long: Toxin AaHIT4 (65 aa).

The 64-residue stretch at 1-64 folds into the LCN-type CS-alpha/beta domain; it reads EHGYLLNKYT…LWNYKTNKCD (64 aa). Intrachain disulfides connect Cys12/Cys63, Cys16/Cys38, Cys23/Cys45, and Cys27/Cys47.

This sequence belongs to the long (4 C-C) scorpion toxin superfamily. Sodium channel inhibitor family. Expressed by the venom gland.

The protein localises to the secreted. Its function is as follows. Has a toxic effect on insects and mammals and is capable of competing with anti-insect scorpion toxins for binding to the sodium channel (Nav) of insects. It also modulates the binding of alpha-type and beta-type anti-mammal scorpion toxins to the mammal sodium channel. It may act on both site 3 and site 4 of voltage-gated sodium channels. In Androctonus australis (Sahara scorpion), this protein is Toxin AaHIT4.